A 906-amino-acid chain; its full sequence is Disintegrin and metalloproteinase domain-containing protein 22 (906 aa).

The first 25 residues, 1–25 (MQAAVAVSVPFLLLCVLGTCPPARC), serve as a signal peptide directing secretion. The propeptide occupies 26–222 (GQAGDASLME…KFILKPRPKR (197 aa)). An N-linked (GlcNAc...) asparagine glycan is attached at N175. At 223-736 (SKRQLRRYPR…LSGNGVAGTN (514 aa)) the chain is on the extracellular side. In terms of domain architecture, Peptidase M12B spans 239 to 438 (KYIELMIVND…GGGACLFNKP (200 aa)). 17 cysteine pairs are disulfide-bonded: C349–C433, C392–C417, C394–C401, C447–C477, C458–C474, C460–C466, C473–C494, C485–C491, C490–C516, C503–C523, C510–C542, C535–C547, C554–C605, C569–C635, C583–C593, C600–C663, and C657–C668. Residues 444 to 531 (PPECGNGFIE…QCAPNIHKMD (88 aa)) form the Disintegrin domain. N-linked (GlcNAc...) asparagine glycosylation occurs at N519. N634 carries an N-linked (GlcNAc...) asparagine glycan. A glycan (N-linked (GlcNAc...) asparagine) is linked at N675. The 38-residue stretch at 675-712 (NFSTCLSSKEGTICSGNGVCSNELKCVCNRHWIGSDCN) folds into the EGF-like domain. 3 disulfides stabilise this stretch: C679/C694, C688/C700, and C702/C711. A helical membrane pass occupies residues 737 to 757 (IIIGIIAGTILVLALILGITA). Residues 758–906 (WGYKNYREQR…QSARLWETSI (149 aa)) are Cytoplasmic-facing. The segment at 785 to 906 (YSDIPPGVST…QSARLWETSI (122 aa)) is disordered. Positions 793-810 (STNSASSSKKRSNGLSHS) are enriched in low complexity. The residue at position 810 (S810) is a Phosphoserine. A compositionally biased stretch (basic and acidic residues) spans 811 to 829 (WSERIPDTKHISDICENGR). S834 carries the phosphoserine modification. The segment covering 842 to 853 (NKKKIRGKRFRP) has biased composition (basic residues). Phosphoserine is present on residues S857, S862, S866, and S870. Residues 862-877 (SPAKSPSSSTGSIASS) show a composition bias toward low complexity.

As to quaternary structure, interacts with LGI1. Interacts with DLG4/PSD95. Also binds LGI4. Interacts with KCNA2 and DLG2. Interacts with ADAM11. Interacts (via C-terminus) with YWHAB/14-3-3 beta. Interacts (via C-terminus) with YWHAZ/14-3-3 zeta. The precursor is cleaved by a furin endopeptidase. Highly expressed in the brain and in some high-grade but not low-grade gliomas. Detected slightly or not at all in other tissues.

Its subcellular location is the cell membrane. It localises to the cell projection. The protein localises to the axon. In terms of biological role, probable ligand for integrin in the brain. This is a non catalytic metalloprotease-like protein. Involved in regulation of cell adhesion and spreading and in inhibition of cell proliferation. Neuronal receptor for LGI1. The protein is Disintegrin and metalloproteinase domain-containing protein 22 (ADAM22) of Homo sapiens (Human).